Reading from the N-terminus, the 182-residue chain is T-cell surface glycoprotein CD3 gamma chain (182 aa).

The first 22 residues, 1 to 22, serve as a signal peptide directing secretion; the sequence is MEQGKHLAGLILAITLLQGTMA. The Ig-like domain maps to 23-98; the sequence is QLKEGKHSVL…GSKENSKRLQ (76 aa). Topologically, residues 23–116 are extracellular; that stretch reads QLKEGKHSVL…CIELNSATVS (94 aa). Cys46 and Cys87 form a disulfide bridge. Asn66 carries an N-linked (GlcNAc...) asparagine glycan. The helical transmembrane segment at 117–137 threads the bilayer; sequence GFIFTEIISLFFLAVGVYFIA. Over 138-182 the chain is Cytoplasmic; it reads GQDGVRQSRASDKQTLLSNDQLYQPLKDREDDQYSHLQGNNSRKN. Ser145 is modified (phosphoserine). Ser148 carries the post-translational modification Phosphoserine; by PKC. Residues 149–177 enclose the ITAM domain; it reads DKQTLLSNDQLYQPLKDREDDQYSHLQGN. A Di-leucine motif motif is present at residues 153–154; the sequence is LL.

In terms of assembly, the TCR-CD3 complex is composed of a CD3D/CD3E and a CD3G/CD3E heterodimers that preferentially associate with TCRalpha and TCRbeta, respectively, to form TCRalpha/CD3E/CD3G and TCRbeta/CD3G/CD3E trimers. In turn, the hexamer interacts with CD3Z homodimer to form the TCR-CD3 complex. Alternatively, TCRalpha and TCRbeta can be replaced by TCRgamma and TCRdelta. Post-translationally, phosphorylated on Tyr residues after T-cell receptor triggering by LCK in association with CD4/CD8. Phosphorylated also by PKC; leading to the TCR complex down-regulation. Phosphorylated on Tyr residues after T-cell receptor triggering by LCK in association with CD4/CD8.

It localises to the cell membrane. Its function is as follows. Part of the TCR-CD3 complex present on T-lymphocyte cell surface that plays an essential role in adaptive immune response. When antigen presenting cells (APCs) activate T-cell receptor (TCR), TCR-mediated signals are transmitted across the cell membrane by the CD3 chains CD3D, CD3E, CD3G and CD3Z. All CD3 chains contain immunoreceptor tyrosine-based activation motifs (ITAMs) in their cytoplasmic domain. Upon TCR engagement, these motifs become phosphorylated by Src family protein tyrosine kinases LCK and FYN, resulting in the activation of downstream signaling pathways. In addition to this role of signal transduction in T-cell activation, CD3G plays an essential role in the dynamic regulation of TCR expression at the cell surface. Indeed, constitutive TCR cycling is dependent on the di-leucine-based (diL) receptor-sorting motif present in CD3G. The polypeptide is T-cell surface glycoprotein CD3 gamma chain (CD3G) (Sus scrofa (Pig)).